Reading from the N-terminus, the 439-residue chain is Arginine biosynthesis bifunctional protein ArgJ, mitochondrial (439 aa).

Substrate contacts are provided by Thr-175, Lys-201, Thr-212, Glu-301, Asn-434, and Ser-439. The Nucleophile role is filled by Thr-212.

This sequence belongs to the ArgJ family. Heterodimer of an alpha and a beta chain. In terms of processing, the alpha and beta chains are autoproteolytically processed from a single precursor protein within the mitochondrion.

The protein localises to the mitochondrion matrix. The catalysed reaction is N(2)-acetyl-L-ornithine + L-glutamate = N-acetyl-L-glutamate + L-ornithine. It carries out the reaction L-glutamate + acetyl-CoA = N-acetyl-L-glutamate + CoA + H(+). It functions in the pathway amino-acid biosynthesis; L-arginine biosynthesis; L-ornithine and N-acetyl-L-glutamate from L-glutamate and N(2)-acetyl-L-ornithine (cyclic): step 1/1. It participates in amino-acid biosynthesis; L-arginine biosynthesis; N(2)-acetyl-L-ornithine from L-glutamate: step 1/4. Its function is as follows. Catalyzes two activities which are involved in the cyclic version of arginine biosynthesis: the synthesis of acetylglutamate from glutamate and acetyl-CoA, and of ornithine by transacetylation between acetylornithine and glutamate. The protein is Arginine biosynthesis bifunctional protein ArgJ, mitochondrial of Candida albicans (strain WO-1) (Yeast).